The primary structure comprises 138 residues: Basic phospholipase A2 PLA-B' (138 aa).

An N-terminal signal peptide occupies residues 1–16 (MRTLWITAVLLVGVEG). Intrachain disulfides connect Cys-42-Cys-131, Cys-44-Cys-60, Cys-59-Cys-111, Cys-65-Cys-138, Cys-66-Cys-104, Cys-73-Cys-97, and Cys-91-Cys-102. 3 residues coordinate Ca(2+): Tyr-43, Gly-45, and Gly-47. His-63 is an active-site residue. Asp-64 contributes to the Ca(2+) binding site. Asp-105 is an active-site residue.

This sequence belongs to the phospholipase A2 family. Group II subfamily. D49 sub-subfamily. Requires Ca(2+) as cofactor. In terms of tissue distribution, expressed by the venom gland.

The protein localises to the secreted. The enzyme catalyses a 1,2-diacyl-sn-glycero-3-phosphocholine + H2O = a 1-acyl-sn-glycero-3-phosphocholine + a fatty acid + H(+). In terms of biological role, PLA2 catalyzes the calcium-dependent hydrolysis of the 2-acyl groups in 3-sn-phosphoglycerides. This Protobothrops flavoviridis (Habu) protein is Basic phospholipase A2 PLA-B'.